Consider the following 284-residue polypeptide: MTAALSLGWPAPAKLNLFLHINGRREDGYHELQTLFQFIEHCDFLDFKVTENTNLKLHSNMSTVVADNDNLILRAAKSLQEYSQCQQGAEIWLDKRLPMGGGLGGGSSDAATTLVALNSLWGLNIPIDELAKIGLKLGADVPVFINGFSAFAEGVGEQLQPVYPPQPWYLVVVPDVHVSTAEIFQDPALPRNTPKHSLTSLMESPWKNDCQELVAKHSPQVAKALAWLLEYAPSRMTGTGACVFGQFEQEQQAKDALAKLPTSMNGFVAKGANKSPLMLRLAQC.

Lys14 is a catalytic residue. Position 98–108 (98–108 (PMGGGLGGGSS)) interacts with ATP. The active site involves Asp140.

It belongs to the GHMP kinase family. IspE subfamily.

The catalysed reaction is 4-CDP-2-C-methyl-D-erythritol + ATP = 4-CDP-2-C-methyl-D-erythritol 2-phosphate + ADP + H(+). It participates in isoprenoid biosynthesis; isopentenyl diphosphate biosynthesis via DXP pathway; isopentenyl diphosphate from 1-deoxy-D-xylulose 5-phosphate: step 3/6. Its function is as follows. Catalyzes the phosphorylation of the position 2 hydroxy group of 4-diphosphocytidyl-2C-methyl-D-erythritol. The sequence is that of 4-diphosphocytidyl-2-C-methyl-D-erythritol kinase from Shewanella piezotolerans (strain WP3 / JCM 13877).